The primary structure comprises 207 residues: Probable flagellin 2 (207 aa).

A propeptide spanning residues 1–14 (MRVGSRKLRRDEKG) is cleaved from the precursor.

Belongs to the archaeal flagellin family.

It is found in the archaeal flagellum. Functionally, flagellin is the subunit protein which polymerizes to form the filaments of archaeal flagella. The protein is Probable flagellin 2 (flaB2) of Archaeoglobus fulgidus (strain ATCC 49558 / DSM 4304 / JCM 9628 / NBRC 100126 / VC-16).